Consider the following 121-residue polypeptide: Large ribosomal subunit protein uL14c (121 aa).

The protein belongs to the universal ribosomal protein uL14 family. In terms of assembly, part of the 50S ribosomal subunit.

Its subcellular location is the plastid. It localises to the chloroplast. In terms of biological role, binds to 23S rRNA. This Phaeodactylum tricornutum (strain CCAP 1055/1) protein is Large ribosomal subunit protein uL14c.